Reading from the N-terminus, the 188-residue chain is Elongation factor P (188 aa).

The protein belongs to the elongation factor P family.

It is found in the cytoplasm. It participates in protein biosynthesis; polypeptide chain elongation. Involved in peptide bond synthesis. Stimulates efficient translation and peptide-bond synthesis on native or reconstituted 70S ribosomes in vitro. Probably functions indirectly by altering the affinity of the ribosome for aminoacyl-tRNA, thus increasing their reactivity as acceptors for peptidyl transferase. The protein is Elongation factor P of Aeromonas hydrophila subsp. hydrophila (strain ATCC 7966 / DSM 30187 / BCRC 13018 / CCUG 14551 / JCM 1027 / KCTC 2358 / NCIMB 9240 / NCTC 8049).